A 161-amino-acid polypeptide reads, in one-letter code: TRAF-interacting protein with FHA domain-containing protein B (161 aa).

One can recognise an FHA domain in the interval 36 to 91 (LLLGRGQDAHLQLQLPRLSRRHLSLEPYLEKGSALLAFCLKALSRKGCVWVNGLTL).

In terms of assembly, interacts with TIFA.

Its function is as follows. Inhibits TIFA-mediated TRAF6 activation possibly by inducing a conformational change in TIFA. In Homo sapiens (Human), this protein is TRAF-interacting protein with FHA domain-containing protein B.